A 1329-amino-acid polypeptide reads, in one-letter code: BRCT domain-containing protein At4g02110 (1329 aa).

2 consecutive BRCT domains span residues 7–97 (LPPK…SILY) and 104–194 (NGIP…DYEI). Disordered stretches follow at residues 295–378 (ANKT…SMER), 393–470 (GEEF…TSEL), 576–645 (EVPE…SPTD), 745–827 (NDVP…ADGK), and 952–1077 (AKKE…KESK). 2 stretches are compositionally biased toward polar residues: residues 323-335 (SLAT…LQRS) and 363-378 (SAFN…SMER). Basic and acidic residues-rich tracts occupy residues 410–422 (VSRK…HHNS) and 600–611 (RMKDKQETELTT). Positions 793-802 (GKSRVKKTKI) are enriched in basic residues. Basic and acidic residues-rich tracts occupy residues 818–827 (DGGDNSADGK) and 971–983 (DDNK…EGIV). Over residues 986–1004 (SSLQSGKKGSSSRVEVGKS) the composition is skewed to low complexity. Over residues 1024–1047 (VMKDVGDNSAKEKENIAVDNESRK) the composition is skewed to basic and acidic residues. Residues 1090–1181 (FQDQEHEPKF…KLLQEEPYEW (92 aa)) form the BRCT 3 domain.

This chain is BRCT domain-containing protein At4g02110, found in Arabidopsis thaliana (Mouse-ear cress).